A 326-amino-acid polypeptide reads, in one-letter code: Tetraketide alpha-pyrone reductase 1 (326 aa).

Residues 8–32, Lys44, and Tyr162 contribute to the NADP(+) site; that span reads VCVTGASGFLASWLVKRLLLEGYEV.

It belongs to the NAD(P)-dependent epimerase/dehydratase family. Dihydroflavonol-4-reductase subfamily. As to quaternary structure, interacts with 4CLL1/ACOS5, PKSA and PKSB. In terms of tissue distribution, specifically expressed in anther tapetal cells during microspores development.

It localises to the cytoplasm. The protein localises to the nucleus. The protein resides in the endoplasmic reticulum. In terms of biological role, involved in the biosynthesis of hydroxylated tetraketide compounds that serve as sporopollenin precursors (the main constituents of exine). Is essential for pollen wall development. Acts on tetraketide alpha-pyrones and reduces the carbonyl function on the tetraketide alkyl chain to a secondary alcohol function. The chain is Tetraketide alpha-pyrone reductase 1 (TKPR1) from Arabidopsis thaliana (Mouse-ear cress).